The chain runs to 140 residues: Nucleoside diphosphate kinase (140 aa).

ATP-binding residues include lysine 11, phenylalanine 59, arginine 87, threonine 93, arginine 104, and asparagine 114. Catalysis depends on histidine 117, which acts as the Pros-phosphohistidine intermediate.

It belongs to the NDK family. In terms of assembly, homotetramer. The cofactor is Mg(2+).

It is found in the cytoplasm. The catalysed reaction is a 2'-deoxyribonucleoside 5'-diphosphate + ATP = a 2'-deoxyribonucleoside 5'-triphosphate + ADP. It carries out the reaction a ribonucleoside 5'-diphosphate + ATP = a ribonucleoside 5'-triphosphate + ADP. Major role in the synthesis of nucleoside triphosphates other than ATP. The ATP gamma phosphate is transferred to the NDP beta phosphate via a ping-pong mechanism, using a phosphorylated active-site intermediate. This chain is Nucleoside diphosphate kinase, found in Rhizorhabdus wittichii (strain DSM 6014 / CCUG 31198 / JCM 15750 / NBRC 105917 / EY 4224 / RW1) (Sphingomonas wittichii).